A 392-amino-acid chain; its full sequence is Phosphoglycerate kinase (392 aa).

Substrate-binding positions include 21–23 (DMN), R36, 59–62 (HLGR), R114, and R147. Residues K198, E320, and 346 to 349 (GGDT) contribute to the ATP site.

This sequence belongs to the phosphoglycerate kinase family. Monomer.

The protein localises to the cytoplasm. The enzyme catalyses (2R)-3-phosphoglycerate + ATP = (2R)-3-phospho-glyceroyl phosphate + ADP. The protein operates within carbohydrate degradation; glycolysis; pyruvate from D-glyceraldehyde 3-phosphate: step 2/5. The chain is Phosphoglycerate kinase from Neisseria meningitidis serogroup C / serotype 2a (strain ATCC 700532 / DSM 15464 / FAM18).